Consider the following 201-residue polypeptide: Orotate phosphoribosyltransferase (201 aa).

113 to 121 (EDIITTGKS) is a binding site for 5-phospho-alpha-D-ribose 1-diphosphate. 2 residues coordinate orotate: Thr-117 and Arg-145.

The protein belongs to the purine/pyrimidine phosphoribosyltransferase family. PyrE subfamily. As to quaternary structure, homodimer. Requires Mg(2+) as cofactor.

It catalyses the reaction orotidine 5'-phosphate + diphosphate = orotate + 5-phospho-alpha-D-ribose 1-diphosphate. It functions in the pathway pyrimidine metabolism; UMP biosynthesis via de novo pathway; UMP from orotate: step 1/2. In terms of biological role, catalyzes the transfer of a ribosyl phosphate group from 5-phosphoribose 1-diphosphate to orotate, leading to the formation of orotidine monophosphate (OMP). This Helicobacter acinonychis (strain Sheeba) protein is Orotate phosphoribosyltransferase.